Here is a 245-residue protein sequence, read N- to C-terminus: Adapter protein MecA (245 aa).

Belongs to the MecA family. As to quaternary structure, homodimer.

Its function is as follows. Enables the recognition and targeting of unfolded and aggregated proteins to the ClpC protease or to other proteins involved in proteolysis. The sequence is that of Adapter protein MecA from Streptococcus pneumoniae (strain Hungary19A-6).